The sequence spans 268 residues: 4-hydroxy-tetrahydrodipicolinate reductase (268 aa).

NAD(+) is bound by residues 10–15 and Asp-36; that span reads GASGRM. An NADP(+)-binding site is contributed by Arg-37. Residues 99–101 and 123–126 contribute to the NAD(+) site; these read GTT and SANM. The active-site Proton donor/acceptor is the His-156. His-157 provides a ligand contact to (S)-2,3,4,5-tetrahydrodipicolinate. Lys-160 serves as the catalytic Proton donor. 166 to 167 serves as a coordination point for (S)-2,3,4,5-tetrahydrodipicolinate; the sequence is GT.

It belongs to the DapB family.

The protein localises to the cytoplasm. The catalysed reaction is (S)-2,3,4,5-tetrahydrodipicolinate + NAD(+) + H2O = (2S,4S)-4-hydroxy-2,3,4,5-tetrahydrodipicolinate + NADH + H(+). It carries out the reaction (S)-2,3,4,5-tetrahydrodipicolinate + NADP(+) + H2O = (2S,4S)-4-hydroxy-2,3,4,5-tetrahydrodipicolinate + NADPH + H(+). It participates in amino-acid biosynthesis; L-lysine biosynthesis via DAP pathway; (S)-tetrahydrodipicolinate from L-aspartate: step 4/4. Catalyzes the conversion of 4-hydroxy-tetrahydrodipicolinate (HTPA) to tetrahydrodipicolinate. In Burkholderia mallei (strain NCTC 10247), this protein is 4-hydroxy-tetrahydrodipicolinate reductase.